The chain runs to 288 residues: Bifunctional protein FolD (288 aa).

Residues glycine 166 to serine 168 and isoleucine 232 contribute to the NADP(+) site.

This sequence belongs to the tetrahydrofolate dehydrogenase/cyclohydrolase family. Homodimer.

It catalyses the reaction (6R)-5,10-methylene-5,6,7,8-tetrahydrofolate + NADP(+) = (6R)-5,10-methenyltetrahydrofolate + NADPH. It carries out the reaction (6R)-5,10-methenyltetrahydrofolate + H2O = (6R)-10-formyltetrahydrofolate + H(+). The protein operates within one-carbon metabolism; tetrahydrofolate interconversion. In terms of biological role, catalyzes the oxidation of 5,10-methylenetetrahydrofolate to 5,10-methenyltetrahydrofolate and then the hydrolysis of 5,10-methenyltetrahydrofolate to 10-formyltetrahydrofolate. The chain is Bifunctional protein FolD from Salmonella arizonae (strain ATCC BAA-731 / CDC346-86 / RSK2980).